The sequence spans 220 residues: Redox-sensing transcriptional repressor Rex (220 aa).

Residues 17 to 56 (LYARSLRYLLQEGVESVSSQELGDRINVTAAQIRKDLSYF) constitute a DNA-binding region (H-T-H motif). Residue 91-96 (GIGHLG) participates in NAD(+) binding.

Belongs to the transcriptional regulatory Rex family. As to quaternary structure, homodimer.

It localises to the cytoplasm. In terms of biological role, modulates transcription in response to changes in cellular NADH/NAD(+) redox state. The chain is Redox-sensing transcriptional repressor Rex from Roseiflexus sp. (strain RS-1).